A 189-amino-acid polypeptide reads, in one-letter code: Receptor activity-modifying protein 2 (189 aa).

A signal peptide spans 1–44 (MAPLRVERAPGGSRLGVTRAQRPTALCLPPLLLLLLLLLGAVSA). The Extracellular portion of the chain corresponds to 45-157 (SPESLNQSLP…VQPTFSDPPE (113 aa)). A compositionally biased stretch (polar residues) spans 49–61 (LNQSLPESQNQSH). A disordered region spans residues 49–69 (LNQSLPESQNQSHPTEDSLVS). Asparagine 50, asparagine 58, asparagine 99, and asparagine 144 each carry an N-linked (GlcNAc...) asparagine glycan. Cystine bridges form between cysteine 83/cysteine 113 and cysteine 98/cysteine 145. The chain crosses the membrane as a helical span at residues 158 to 179 (DVLLAMIIAPICLIPFLVTLVV). Residues 180–189 (WRSKDSDAQA) lie on the Cytoplasmic side of the membrane.

It belongs to the RAMP family. As to quaternary structure, heterodimer of CALCRL and RAMP2; the interaction forms the receptor complex for adrenomedullin/ADM. Heterodimer of CALCR and RAMP2; interaction forms the AMYR2 receptor complex for calcitonin/CALC and amylin/IAPP. As to expression, ubiquitous. Expressed predominantly in embryonic brain, lung and gut and in adult heart, lung, skeletal muscle and brain.

The protein resides in the cell membrane. In terms of biological role, accessory protein that interacts with and modulates the function of G-protein coupled receptors including calcitonin gene-related peptide type 1 receptor (CALCRL) and calcitonin receptor (CALCR). Required for the transport of CALCRL to the plasma membrane. Together with CALCRL, form a receptor complex for adrenomedullin/ADM. Together with CALCR, act as a receptor complex for calcitonin/CT/CALC. Together with CALCR, also act as a receptor complex for amylin/IAPP. This chain is Receptor activity-modifying protein 2, found in Mus musculus (Mouse).